We begin with the raw amino-acid sequence, 193 residues long: MNREKTLDSIPIDVFLDIFSRLPAKSVGRSCCVSNRWASILGSQDFKELFLTMSSTRPRLLFALKPYNGDECLFYSSPHPHNHYEKSTVVVTADFHTKFPKSQSDCIYASGLSWRNIQCPLTHYPQGKGICINGVLYYLASHDEKPYMIVSFDVRYEKFRFINKKCHSYELINYKGNPIWPCLYIIGSFSHFA.

Residues 4–53 (EKTLDSIPIDVFLDIFSRLPAKSVGRSCCVSNRWASILGSQDFKELFLTM) enclose the F-box domain.

The protein is Putative F-box protein At1g31072 of Arabidopsis thaliana (Mouse-ear cress).